A 44-amino-acid chain; its full sequence is MKRTYQASKVRRARTHGFLVRMKTRGGRAVINARRAKGRKRLAV.

It belongs to the bacterial ribosomal protein bL34 family.

This Variovorax paradoxus (strain S110) protein is Large ribosomal subunit protein bL34.